The sequence spans 542 residues: Organic anion transporter 3 (542 aa).

Topologically, residues 1-20 are cytoplasmic; that stretch reads MTFSEILDRVGSMGRFQFLH. Ser4 carries the phosphoserine modification. The helical transmembrane segment at 21 to 41 threads the bilayer; sequence VAILGLPILNMANHNLLQIFT. Over 42–123 the chain is Extracellular; sequence AATPVHHCRP…LVCNSNKLKE (82 aa). Asn86 carries an N-linked (GlcNAc...) asparagine glycan. The chain crosses the membrane as a helical span at residues 124 to 144; sequence MAQSIFMAGILIGGLVLGDLS. Residues 145-154 lie on the Cytoplasmic side of the membrane; sequence DRFGRRPILT. A helical membrane pass occupies residues 155-175; that stretch reads CSYLLLAASGSGAAFSPTFPI. A topological domain (extracellular) is located at residue Tyr176. The chain crosses the membrane as a helical span at residues 177 to 197; it reads MVFRFLCGFGISGITLSTVIL. Over 198 to 212 the chain is Cytoplasmic; that stretch reads NVEWVPTRMRAIMST. The helical transmembrane segment at 213 to 233 threads the bilayer; it reads ALGYCYTFGQFILPGLAYAIP. At 234 to 236 the chain is on the extracellular side; it reads QWR. A helical membrane pass occupies residues 237-257; sequence WLQLTVSIPFFIFFLSSWWTP. Residues 258–327 are Cytoplasmic-facing; the sequence is ESIRWLVLSG…FRIPMLRRMT (70 aa). Residues 328–348 form a helical membrane-spanning segment; sequence FCLSLAWFATGFAYYSLAMGV. The Extracellular segment spans residues 349–354; it reads EEFGVN. A helical membrane pass occupies residues 355 to 375; sequence LYILQIIFGGVDVPAKFITIL. The Cytoplasmic portion of the chain corresponds to 376-386; the sequence is SLSYLGRHTTQ. The helical transmembrane segment at 387-407 threads the bilayer; it reads AAALLLAGGAILALTFVPLDL. Residues 408–471 are Extracellular-facing; the sequence is QTVRTVLAVF…LVKITGEVQP (64 aa). Residues 472–492 form a helical membrane-spanning segment; the sequence is FIPNIIYGITALLGGSAAFFL. The Cytoplasmic portion of the chain corresponds to 493–542; sequence PETLNQPLPETIEDLENWSLRAKKPKQEPEVEKASQRIPLQPHGPGLGSS. Positions 515–542 are disordered; sequence KKPKQEPEVEKASQRIPLQPHGPGLGSS. Over residues 517–527 the composition is skewed to basic and acidic residues; the sequence is PKQEPEVEKAS.

It belongs to the major facilitator (TC 2.A.1) superfamily. Organic cation transporter (TC 2.A.1.19) family.

The protein localises to the basolateral cell membrane. It carries out the reaction estrone 3-sulfate(out) + glutarate(in) = estrone 3-sulfate(in) + glutarate(out). The enzyme catalyses estrone 3-sulfate(in) + 2-oxoglutarate(out) = estrone 3-sulfate(out) + 2-oxoglutarate(in). It catalyses the reaction glutarate(in) + 2-oxoglutarate(out) = glutarate(out) + 2-oxoglutarate(in). The catalysed reaction is urate(in) + 2-oxoglutarate(out) = urate(out) + 2-oxoglutarate(in). It carries out the reaction taurocholate(out) + glutarate(in) = taurocholate(in) + glutarate(out). The enzyme catalyses dehydroepiandrosterone 3-sulfate(out) + glutarate(in) = dehydroepiandrosterone 3-sulfate(in) + glutarate(out). It catalyses the reaction prostaglandin F2alpha(out) + glutarate(in) = prostaglandin F2alpha(in) + glutarate(out). The catalysed reaction is prostaglandin F2alpha(out) + 2-oxoglutarate(in) = prostaglandin F2alpha(in) + 2-oxoglutarate(out). It carries out the reaction (R)-carnitine(out) + 2-oxoglutarate(in) = (R)-carnitine(in) + 2-oxoglutarate(out). The enzyme catalyses glutarate(in) + (R)-carnitine(out) = glutarate(out) + (R)-carnitine(in). It catalyses the reaction prostaglandin E2(out) + 2-oxoglutarate(in) = prostaglandin E2(in) + 2-oxoglutarate(out). The catalysed reaction is prostaglandin E2(out) + glutarate(in) = prostaglandin E2(in) + glutarate(out). It carries out the reaction urate(in) + glutarate(out) = urate(out) + glutarate(in). The enzyme catalyses taurocholate(out) + 2-oxoglutarate(in) = taurocholate(in) + 2-oxoglutarate(out). It catalyses the reaction dehydroepiandrosterone 3-sulfate(out) + 2-oxoglutarate(in) = dehydroepiandrosterone 3-sulfate(in) + 2-oxoglutarate(out). The catalysed reaction is kynurenate(out) + a dicarboxylate(in) = kynurenate(in) + a dicarboxylate(out). It carries out the reaction (indol-3-yl)acetate(out) + a dicarboxylate(in) = (indol-3-yl)acetate(in) + a dicarboxylate(out). The enzyme catalyses indoxyl sulfate(out) + a dicarboxylate(in) = indoxyl sulfate(in) + a dicarboxylate(out). It catalyses the reaction N-benzoylglycine(out) + a dicarboxylate(in) = N-benzoylglycine(in) + a dicarboxylate(out). The catalysed reaction is 3-carboxy-4-methyl-5-propyl-2-furanpropanoate(out) + a dicarboxylate(in) = 3-carboxy-4-methyl-5-propyl-2-furanpropanoate(in) + a dicarboxylate(out). It carries out the reaction (6R)-L-erythro-5,6,7,8-tetrahydrobiopterin(out) + a dicarboxylate(in) = (6R)-L-erythro-5,6,7,8-tetrahydrobiopterin(in) + a dicarboxylate(out). The enzyme catalyses L-erythro-7,8-dihydrobiopterin(out) + a dicarboxylate(in) = L-erythro-7,8-dihydrobiopterin(in) + a dicarboxylate(out). It catalyses the reaction L-sepiapterin(out) + a dicarboxylate(in) = L-sepiapterin(in) + a dicarboxylate(out). Functionally, functions as an organic anion/dicarboxylate exchanger that couples organic anion uptake indirectly to the sodium gradient. Transports organic anions such as estrone 3-sulfate (E1S) and urate in exchange for dicarboxylates such as glutarate or ketoglutarate (2-oxoglutarate). Plays an important role in the excretion of endogenous and exogenous organic anions, especially from the kidney and the brain. E1S transport is pH- and chloride-dependent and may also involve E1S/cGMP exchange. Responsible for the transport of prostaglandin E2 (PGE2) and prostaglandin F2(alpha) (PGF2(alpha)) in the basolateral side of the renal tubule. Involved in the transport of neuroactive tryptophan metabolites kynurenate and xanthurenate. Functions as a biopterin transporters involved in the uptake and the secretion of coenzymes tetrahydrobiopterin (BH4), dihydrobiopterin (BH2) and sepiapterin to urine, thereby determining baseline levels of blood biopterins. May be involved in the basolateral transport of steviol, a metabolite of the popular sugar substitute stevioside. May participate in the detoxification/ renal excretion of drugs and xenobiotics, such as the histamine H(2)-receptor antagonists fexofenadine and cimetidine, the antibiotic benzylpenicillin (PCG), the anionic herbicide 2,4-dichloro-phenoxyacetate (2,4-D), the diagnostic agent p-aminohippurate (PAH), the antiviral acyclovir (ACV), and the mycotoxin ochratoxin (OTA), by transporting these exogenous organic anions across the cell membrane in exchange for dicarboxylates such as 2-oxoglutarate. Contributes to the renal uptake of potent uremic toxins (indoxyl sulfate (IS), indole acetate (IA), hippurate/N-benzoylglycine (HA) and 3-carboxy-4-methyl-5-propyl-2-furanpropionate (CMPF)), pravastatin, PCG, E1S and dehydroepiandrosterone sulfate (DHEAS), and is partly involved in the renal uptake of temocaprilat (an angiotensin-converting enzyme (ACE) inhibitor). May contribute to the release of cortisol in the adrenals. Involved in one of the detoxification systems on the choroid plexus (CP), removes substrates such as E1S or taurocholate (TC), PCG, 2,4-D and PAH, from the cerebrospinal fluid (CSF) to the blood for eventual excretion in urine and bile. Also contributes to the uptake of several other organic compounds such as the prostanoids prostaglandin E(2) and prostaglandin F(2-alpha), L-carnitine, and the therapeutic drugs allopurinol, 6-mercaptopurine (6-MP) and 5-fluorouracil (5-FU). Mediates the transport of PAH, PCG, and the statins pravastatin and pitavastatin, from the cerebrum into the blood circulation across the blood-brain barrier (BBB). In summary, plays a role in the efflux of drugs and xenobiotics, helping reduce their undesired toxicological effects on the body. This Pongo abelii (Sumatran orangutan) protein is Organic anion transporter 3 (SLC22A8).